The chain runs to 345 residues: Phosphoribosylformylglycinamidine cyclo-ligase (345 aa).

Belongs to the AIR synthase family.

It localises to the cytoplasm. The catalysed reaction is 2-formamido-N(1)-(5-O-phospho-beta-D-ribosyl)acetamidine + ATP = 5-amino-1-(5-phospho-beta-D-ribosyl)imidazole + ADP + phosphate + H(+). It functions in the pathway purine metabolism; IMP biosynthesis via de novo pathway; 5-amino-1-(5-phospho-D-ribosyl)imidazole from N(2)-formyl-N(1)-(5-phospho-D-ribosyl)glycinamide: step 2/2. This chain is Phosphoribosylformylglycinamidine cyclo-ligase, found in Methanopyrus kandleri (strain AV19 / DSM 6324 / JCM 9639 / NBRC 100938).